Here is a 468-residue protein sequence, read N- to C-terminus: Ribulose bisphosphate carboxylase large chain (468 aa).

An N6,N6,N6-trimethyllysine modification is found at K4. Positions 113 and 163 each coordinate substrate. K165 acts as the Proton acceptor in catalysis. K167 lines the substrate pocket. Mg(2+)-binding residues include K191, D193, and E194. K191 is modified (N6-carboxylysine). Catalysis depends on H284, which acts as the Proton acceptor. The substrate site is built by R285, H317, and S369.

The protein belongs to the RuBisCO large chain family. Type I subfamily. As to quaternary structure, heterohexadecamer of 8 large chains and 8 small chains; disulfide-linked. The disulfide link is formed within the large subunit homodimers. Mg(2+) is required as a cofactor. In terms of processing, the disulfide bond which can form in the large chain dimeric partners within the hexadecamer appears to be associated with oxidative stress and protein turnover.

The protein localises to the plastid. The protein resides in the chloroplast. The catalysed reaction is 2 (2R)-3-phosphoglycerate + 2 H(+) = D-ribulose 1,5-bisphosphate + CO2 + H2O. It catalyses the reaction D-ribulose 1,5-bisphosphate + O2 = 2-phosphoglycolate + (2R)-3-phosphoglycerate + 2 H(+). In terms of biological role, ruBisCO catalyzes two reactions: the carboxylation of D-ribulose 1,5-bisphosphate, the primary event in carbon dioxide fixation, as well as the oxidative fragmentation of the pentose substrate in the photorespiration process. Both reactions occur simultaneously and in competition at the same active site. The chain is Ribulose bisphosphate carboxylase large chain from Pandorea jasminoides (Bower vine).